The following is a 158-amino-acid chain: Aspartate carbamoyltransferase regulatory chain (158 aa).

Residues C111, C116, C140, and C143 each contribute to the Zn(2+) site.

Belongs to the PyrI family. In terms of assembly, contains catalytic and regulatory chains. Zn(2+) serves as cofactor.

Involved in allosteric regulation of aspartate carbamoyltransferase. In Metallosphaera sedula (strain ATCC 51363 / DSM 5348 / JCM 9185 / NBRC 15509 / TH2), this protein is Aspartate carbamoyltransferase regulatory chain.